A 745-amino-acid chain; its full sequence is Bacteriophage N4 adsorption protein B (745 aa).

3 consecutive transmembrane segments (helical) span residues 8–28, 362–382, and 393–413; these read FATW…IMFI, ISNF…LLLA, and FLSI…NFGL.

Its subcellular location is the cell inner membrane. Required for bacteriophage N4 adsorption. May be a component of the phage receptor. This is Bacteriophage N4 adsorption protein B (nfrB) from Escherichia coli O157:H7.